The sequence spans 896 residues: Translation initiation factor IF-2 (896 aa).

Basic and acidic residues-rich tracts occupy residues Lys-94–Val-159 and Asp-166–Trp-219. The interval Lys-94 to Lys-307 is disordered. The segment covering Gly-256–Asn-271 has biased composition (basic residues). The segment covering Lys-272–Ala-285 has biased composition (basic and acidic residues). The tr-type G domain occupies Pro-395–Lys-564. The interval Gly-404–Thr-411 is G1. A GTP-binding site is contributed by Gly-404–Thr-411. Positions Gly-429–His-433 are G2. A G3 region spans residues Asp-450 to Gly-453. GTP is bound by residues Asp-450–His-454 and Asn-504–Asp-507. The interval Asn-504–Asp-507 is G4. The G5 stretch occupies residues Ser-540–Lys-542.

It belongs to the TRAFAC class translation factor GTPase superfamily. Classic translation factor GTPase family. IF-2 subfamily.

The protein resides in the cytoplasm. In terms of biological role, one of the essential components for the initiation of protein synthesis. Protects formylmethionyl-tRNA from spontaneous hydrolysis and promotes its binding to the 30S ribosomal subunits. Also involved in the hydrolysis of GTP during the formation of the 70S ribosomal complex. The sequence is that of Translation initiation factor IF-2 (infB) from Klebsiella oxytoca.